We begin with the raw amino-acid sequence, 403 residues long: Peptidyl-prolyl cis-trans isomerase FKBP8 (403 aa).

The interval valine 26–glutamate 54 is disordered. Residues aspartate 28–leucine 39 are compositionally biased toward acidic residues. The PPIase FKBP-type domain maps to glycine 110–glutamate 195. Residues alanine 212–asparagine 245 form a TPR 1 repeat. Residues lysine 240, lysine 262, lysine 264, and lysine 275 each participate in a glycyl lysine isopeptide (Lys-Gly) (interchain with G-Cter in ubiquitin) cross-link. TPR repeat units lie at residues valine 263–asparagine 296 and isoleucine 297–asparagine 330. Serine 287 carries the post-translational modification Phosphoserine. Residues lysine 298, lysine 305, lysine 325, lysine 331, lysine 339, lysine 342, and lysine 343 each participate in a glycyl lysine isopeptide (Lys-Gly) (interchain with G-Cter in ubiquitin) cross-link. A helical transmembrane segment spans residues tryptophan 381–alanine 401.

Homomultimers or heteromultimers (Potential). Forms heterodimer with calmodulin. When activated by calmodulin and calcium, interacts with the BH4 domain of BCL2 and weakly with BCLX isoform Bcl-X(L). Does not bind and inhibit calcineurin. Interacts with ZFYVE27; may negatively regulate ZFYVE27 phosphorylation. Ca(2+) is required as a cofactor. Ubiquitinated by PRKN during mitophagy, leading to its degradation and enhancement of mitophagy. Deubiquitinated by USP30.

The protein localises to the mitochondrion membrane. The catalysed reaction is [protein]-peptidylproline (omega=180) = [protein]-peptidylproline (omega=0). In terms of biological role, constitutively inactive PPiase, which becomes active when bound to calmodulin and calcium. Seems to act as a chaperone for BCL2, targets it to the mitochondria and modulates its phosphorylation state. The BCL2/FKBP8/calmodulin/calcium complex probably interferes with the binding of BCL2 to its targets. The active form of FKBP8 may therefore play a role in the regulation of apoptosis. This is Peptidyl-prolyl cis-trans isomerase FKBP8 (Fkbp8) from Rattus norvegicus (Rat).